The primary structure comprises 874 residues: Putative disease resistance protein At5g05400 (874 aa).

Positions 22–74 (LSRNQNRFRNLVDHVAALKKTVRQLEARRDDLLKRIKVQEDRGLNLLDEVQQW) form a coiled coil. Residues 139–434 (AQKGPIPKVE…GQGIILGSKG (296 aa)) enclose the NB-ARC domain. ATP is bound at residue 182–189 (GMGGVGKT). LRR repeat units follow at residues 483–505 (QKNV…EDQK), 506–527 (AVRR…LHCP), 528–548 (KLET…EFLS), 552–574 (ILMV…SPLY), 575–597 (SLRF…YALR), 598–620 (NLLY…HDLP), and 621–642 (NLEV…VRQI).

The protein belongs to the disease resistance NB-LRR family.

Functionally, potential disease resistance protein. The polypeptide is Putative disease resistance protein At5g05400 (Arabidopsis thaliana (Mouse-ear cress)).